Consider the following 78-residue polypeptide: Alpha-neurotoxin homolog 7 (78 aa).

The N-terminal stretch at 1-21 is a signal peptide; sequence MKTLLLTLVVVTIVCLDFGYT. Cystine bridges form between Cys-24-Cys-42, Cys-37-Cys-57, Cys-59-Cys-70, and Cys-71-Cys-76.

Belongs to the three-finger toxin family. Short-chain subfamily. Orphan group XII sub-subfamily. As to expression, expressed by the venom gland.

It localises to the secreted. The sequence is that of Alpha-neurotoxin homolog 7 from Micrurus corallinus (Brazilian coral snake).